Reading from the N-terminus, the 430-residue chain is Enolase (430 aa).

Gln-163 lines the (2R)-2-phosphoglycerate pocket. Glu-205 functions as the Proton donor in the catalytic mechanism. Residues Asp-242, Glu-287, and Asp-314 each contribute to the Mg(2+) site. (2R)-2-phosphoglycerate is bound by residues Lys-339, Arg-368, Ser-369, and Lys-390. Lys-339 (proton acceptor) is an active-site residue.

It belongs to the enolase family. The cofactor is Mg(2+).

The protein resides in the cytoplasm. It is found in the secreted. It localises to the cell surface. The catalysed reaction is (2R)-2-phosphoglycerate = phosphoenolpyruvate + H2O. It functions in the pathway carbohydrate degradation; glycolysis; pyruvate from D-glyceraldehyde 3-phosphate: step 4/5. Catalyzes the reversible conversion of 2-phosphoglycerate (2-PG) into phosphoenolpyruvate (PEP). It is essential for the degradation of carbohydrates via glycolysis. The polypeptide is Enolase (Bacillus velezensis (strain DSM 23117 / BGSC 10A6 / LMG 26770 / FZB42) (Bacillus amyloliquefaciens subsp. plantarum)).